The following is a 502-amino-acid chain: Glutamate dehydrogenase, mitochondrial (502 aa).

Residue 96 to 98 coordinates NAD(+); it reads HHR. The substrate site is built by Lys102 and Lys126. An NAD(+)-binding site is contributed by Asp131. Lys138 is an active-site residue. Position 394 (Ser394) interacts with substrate.

This sequence belongs to the Glu/Leu/Phe/Val dehydrogenases family. As to quaternary structure, homohexamer.

The protein localises to the mitochondrion matrix. It carries out the reaction L-glutamate + NAD(+) + H2O = 2-oxoglutarate + NH4(+) + NADH + H(+). It catalyses the reaction L-glutamate + NADP(+) + H2O = 2-oxoglutarate + NH4(+) + NADPH + H(+). Subject to allosteric regulation. Activated by AMP and ADP. The protein is Glutamate dehydrogenase, mitochondrial (gluD) of Dictyostelium discoideum (Social amoeba).